A 690-amino-acid chain; its full sequence is Quinohemoprotein alcohol dehydrogenase ADH IIB (690 aa).

The N-terminal stretch at 1–22 is a signal peptide; sequence MKKPLRTSLLMLCLATPLAALA. Glu81 serves as a coordination point for pyrroloquinoline quinone. A disulfide bridge connects residues Cys127 and Cys128. Pyrroloquinoline quinone contacts are provided by residues Arg133, Thr177, and 193–194; that span reads GA. Glu195 provides a ligand contact to Ca(2+). Residue Thr252 participates in pyrroloquinoline quinone binding. Ca(2+) contacts are provided by Asn272 and Asp317. Asp317 acts as the Proton acceptor in catalysis. Pyrroloquinoline quinone-binding positions include Lys344, 404–405, and Val547; that span reads NW. One can recognise a Cytochrome c domain in the interval 600 to 678; sequence EQVQAGKQLY…QIKLYVMSRE (79 aa). Residues Cys613, Cys616, His617, and Met655 each contribute to the heme c site.

The protein belongs to the bacterial PQQ dehydrogenase family. Monomer. The cofactor is pyrroloquinoline quinone. Requires Ca(2+) as cofactor. Heme c is required as a cofactor.

Its subcellular location is the periplasm. The catalysed reaction is 2 oxidized [azurin] + a primary alcohol = 2 reduced [azurin] + an aldehyde + 2 H(+). Inhibited by 10 mM 1-butanol. In terms of biological role, catalyzes the dye-linked oxidation of primary alcohols to the corresponding aldehydes and the (subsequent) oxidation of the aldehydes to carboxylic acids. Exhibits activity with longer mono-alcohols (C-4 to C-7) but not with methanol or glycerol. Reacts with 1,2-propanediol and 1,3-propanediol but not with sugar alcohols such as D-sorbitol. This Pseudomonas putida (Arthrobacter siderocapsulatus) protein is Quinohemoprotein alcohol dehydrogenase ADH IIB.